Here is a 326-residue protein sequence, read N- to C-terminus: tRNA uridine(34) hydroxylase (326 aa).

Residues 123–217 (SDPEVLLIDT…YLEEVKPEES (95 aa)) form the Rhodanese domain. The active-site Cysteine persulfide intermediate is the Cys-177. Positions 293-326 (KSRGESHIGSDVKQVIEARRQDKVERKQRQHQEG) are disordered.

It belongs to the TrhO family.

The enzyme catalyses uridine(34) in tRNA + AH2 + O2 = 5-hydroxyuridine(34) in tRNA + A + H2O. Functionally, catalyzes oxygen-dependent 5-hydroxyuridine (ho5U) modification at position 34 in tRNAs. The protein is tRNA uridine(34) hydroxylase of Shewanella loihica (strain ATCC BAA-1088 / PV-4).